Reading from the N-terminus, the 441-residue chain is uncharacterized protein (441 aa).

An N-terminal signal peptide occupies residues 1 to 23 (MSRKYLLSLLLVGALVISVVASG). C24 carries the post-translational modification N-acetylcysteine. A lipid anchor (S-archaeol cysteine) is attached at C24.

Belongs to the bacterial solute-binding protein 1 family.

Its subcellular location is the cell membrane. Its function is as follows. Probably part of a binding-protein-dependent transport system PH1214/15/16. This is an uncharacterized protein from Pyrococcus horikoshii (strain ATCC 700860 / DSM 12428 / JCM 9974 / NBRC 100139 / OT-3).